The sequence spans 29 residues: Lambda-theraphotoxin-Ec2a (29 aa).

Intrachain disulfides connect Cys-2/Cys-16, Cys-9/Cys-21, and Cys-15/Cys-25.

It belongs to the neurotoxin 30 (phrixotoxin) family. In terms of tissue distribution, expressed by the venom gland.

It is found in the secreted. Insect-selective neurotoxin that potently blocks insect calcium-activated potassium (BKCa) channels (Slo-type) in cockroach dorsal unpaired median (DUM) neurons (IC(50)=3.7 nM). This occurs in the absence of any shifts in the voltage dependence of activation. At high concentrations (330 nM), it partially inhibits cockroach delayed-rectifier potassium channels (Kv) currents. May interact with the turret and/or loop region of the external entrance to the channel and does not project deeply into the pore of the channel. In vivo, does not show toxicity in mice after intracerebroventricular injection of up to 25 pmol/g (1.8 ug/20 g mouse). The polypeptide is Lambda-theraphotoxin-Ec2a (Eucratoscelus constrictus (African red-rump baboon spider)).